A 205-amino-acid chain; its full sequence is Nuclear transcription factor Y subunit C-6 (205 aa).

Residues 1 to 24 (MEPKSTTPPPPPPPPVLGAPVPYP) are disordered.

The protein belongs to the NFYC/HAP5 subunit family. In terms of assembly, heterotrimeric transcription factor composed of three components, NF-YA, NF-YB and NF-YC. NF-YB and NF-YC must interact and dimerize for NF-YA association and DNA binding. Interacts with NFYB2. Interacts with NFYB8, NFYB10 and HD5/NFYB11.

It is found in the nucleus. The protein localises to the cytoplasm. In terms of biological role, component of the NF-Y/HAP transcription factor complex. This is Nuclear transcription factor Y subunit C-6 from Oryza sativa subsp. japonica (Rice).